We begin with the raw amino-acid sequence, 111 residues long: Large ribosomal subunit protein P2w (111 aa).

A disordered region spans residues Ala63–Glu111. The segment covering Ala88–Lys98 has biased composition (basic and acidic residues). Ser101 is subject to Phosphoserine.

Belongs to the eukaryotic ribosomal protein P1/P2 family. P1 and P2 exist as dimers at the large ribosomal subunit.

Its function is as follows. Plays an important role in the elongation step of protein synthesis. In Arabidopsis thaliana (Mouse-ear cress), this protein is Large ribosomal subunit protein P2w (RPP2D).